The sequence spans 504 residues: Cytochrome P450 monooxygenase iccC (504 aa).

The helical transmembrane segment at 7–26 threads the bilayer; the sequence is LPWILLYTGFLAIFLSRLFS. 4 N-linked (GlcNAc...) asparagine glycosylation sites follow: Asn134, Asn312, Asn365, and Asn374. Cys452 is a heme binding site. The N-linked (GlcNAc...) asparagine glycan is linked to Asn494.

This sequence belongs to the cytochrome P450 family. Heme serves as cofactor.

Its subcellular location is the membrane. The catalysed reaction is (3E,5S)-3-[(2E,4E,8S,10E,12Z)-1-hydroxy-4,8-dimethyltetradeca-2,4,10,12-tetraen-1-ylidene]-5-[(4-hydroxyphenyl)methyl]pyrrolidine-2,4-dione + reduced [NADPH--hemoprotein reductase] + O2 = 3-[(2E,4E,8S,10E,12Z)-4,8-dimethyltetradeca-2,4,10,12-tetraenoyl]-4-hydroxy-5-(4-hydroxyphenyl)-1,2-dihydropyridin-2-one + oxidized [NADPH--hemoprotein reductase] + 2 H2O. Its pathway is mycotoxin biosynthesis. Cytochrome P450 monooxygenase; part of the gene cluster that mediates the biosynthesis of ilicicolin H, a 4-hydroxy-2-pyridonealkaloid that has potent and broad antifungal activities by inhibiting the mitochondrial respiration chain. IccC catalyzes the ring expansion of the tetramate intermediate to the acyclic 2-pyridone intermediate that contains the trans bis-diene chain. The biosynthesis of ilicicolin H starts with formation of the tetramic acid by the hybrid PKS-NRPS synthetase iccA with the partnering trans-enoyl reductase iccB since iccA lacks a designated enoylreductase (ER) domain. The cytochrome P450 monooxygenase iccC then catalyzes the ring expansion of the tetramate to the acyclic 2-pyridone. The pericyclase iccD further converts the acyclic 2-pyridone into 8-epi-ilicicolin H. Finally, the epimerase iccE converts 8-epi-ilicicolin H into ilicicolin H via epimerization. IccA to iccE are sufficient for ilicicolin H biosynthesis and the roles of the remaining enzymes, iccF, iccG and iccH within the pathway have still to be determined. The chain is Cytochrome P450 monooxygenase iccC from Talaromyces variabilis (Penicillium variabile).